A 681-amino-acid polypeptide reads, in one-letter code: Chaperone protein htpG (681 aa).

Residues 1-326 (MQKGNIGVTT…SPDIPLNVSR (326 aa)) form an a; substrate-binding region. Residues 327 to 545 (SYLQSDSNVK…YMRRMKEMAN (219 aa)) are b. The segment at 546–681 (IQAGMSFYGE…NFVKRSIELI (136 aa)) is c. Residues 601–620 (DALKKKQEGKKDEDIPTAEK) form a disordered region.

The protein belongs to the heat shock protein 90 family. Homodimer.

Its subcellular location is the cytoplasm. Its function is as follows. Molecular chaperone. Has ATPase activity. In Bacteroides fragilis (strain 638R), this protein is Chaperone protein htpG.